We begin with the raw amino-acid sequence, 257 residues long: Pimeloyl-[acyl-carrier protein] methyl ester esterase (257 aa).

In terms of domain architecture, AB hydrolase-1 spans 15–241 (HLVLLHGWGL…KAAHAPFVSH (227 aa)). Substrate contacts are provided by residues W22, 82–83 (SL), and 143–147 (FLALQ). The Nucleophile role is filled by S82. Residues D207 and H235 contribute to the active site. H235 is a binding site for substrate.

This sequence belongs to the AB hydrolase superfamily. Carboxylesterase BioH family. Monomer.

Its subcellular location is the cytoplasm. It carries out the reaction 6-carboxyhexanoyl-[ACP] methyl ester + H2O = 6-carboxyhexanoyl-[ACP] + methanol + H(+). It functions in the pathway cofactor biosynthesis; biotin biosynthesis. The physiological role of BioH is to remove the methyl group introduced by BioC when the pimeloyl moiety is complete. It allows to synthesize pimeloyl-ACP via the fatty acid synthetic pathway through the hydrolysis of the ester bonds of pimeloyl-ACP esters. The protein is Pimeloyl-[acyl-carrier protein] methyl ester esterase of Klebsiella pneumoniae (strain 342).